The chain runs to 66 residues: uncharacterized protein (66 aa).

A helical membrane pass occupies residues 11-31; the sequence is PFPLLGVWIIVIIIVAVIGLL.

It localises to the membrane. This is an uncharacterized protein from Chenopodium amaranticolor (Quinoa).